We begin with the raw amino-acid sequence, 59 residues long: Putative movement protein p6.6 (59 aa).

Residues 13–35 (RVGPLLVLCLLLLLILFSRSWNV) traverse the membrane as a helical segment.

Its subcellular location is the membrane. Its function is as follows. Cell-to-cell movement. In Panicum mosaic virus (strain United States/Kansas 109S) (PMV), this protein is Putative movement protein p6.6.